The primary structure comprises 156 residues: MNINFTLLAQALAFAGLIWIIATKIWPPLMNAIEERQQKIAEGLAAADRSQKDLAQAQEKVNEALKEARTKANEIIDQAHARANQIVDAARTEAITEATRQKDLAQAEIDAAANRAREDLRKQVSALAVTGAEKLLKREIDANAHKALLDELASEI.

The chain crosses the membrane as a helical span at residues 3–23 (INFTLLAQALAFAGLIWIIAT).

This sequence belongs to the ATPase B chain family. F-type ATPases have 2 components, F(1) - the catalytic core - and F(0) - the membrane proton channel. F(1) has five subunits: alpha(3), beta(3), gamma(1), delta(1), epsilon(1). F(0) has three main subunits: a(1), b(2) and c(10-14). The alpha and beta chains form an alternating ring which encloses part of the gamma chain. F(1) is attached to F(0) by a central stalk formed by the gamma and epsilon chains, while a peripheral stalk is formed by the delta and b chains.

The protein resides in the cell inner membrane. Functionally, f(1)F(0) ATP synthase produces ATP from ADP in the presence of a proton or sodium gradient. F-type ATPases consist of two structural domains, F(1) containing the extramembraneous catalytic core and F(0) containing the membrane proton channel, linked together by a central stalk and a peripheral stalk. During catalysis, ATP synthesis in the catalytic domain of F(1) is coupled via a rotary mechanism of the central stalk subunits to proton translocation. In terms of biological role, component of the F(0) channel, it forms part of the peripheral stalk, linking F(1) to F(0). The sequence is that of ATP synthase subunit b from Stenotrophomonas maltophilia (strain R551-3).